Reading from the N-terminus, the 333-residue chain is Probable pyridoxal reductase 2 (333 aa).

The Proton donor role is filled by Y52.

This sequence belongs to the aldo/keto reductase family.

It localises to the cytoplasm. The enzyme catalyses pyridoxine + NADP(+) = pyridoxal + NADPH + H(+). Catalyzes the reduction of pyridoxal (PL) with NADPH and oxidation of pyridoxine (PN) with NADP(+). The sequence is that of Probable pyridoxal reductase 2 from Schizosaccharomyces pombe (strain 972 / ATCC 24843) (Fission yeast).